The following is a 249-amino-acid chain: Pyridoxine 5'-phosphate synthase (249 aa).

Position 7 (Asn-7) interacts with 3-amino-2-oxopropyl phosphate. 9-10 serves as a coordination point for 1-deoxy-D-xylulose 5-phosphate; the sequence is DH. Residue Arg-18 coordinates 3-amino-2-oxopropyl phosphate. The Proton acceptor role is filled by His-43. 1-deoxy-D-xylulose 5-phosphate is bound by residues Arg-45 and His-50. The Proton acceptor role is filled by Glu-70. Thr-100 lines the 1-deoxy-D-xylulose 5-phosphate pocket. His-190 functions as the Proton donor in the catalytic mechanism. 3-amino-2-oxopropyl phosphate is bound by residues Gly-191 and 212–213; that span reads GH.

The protein belongs to the PNP synthase family. In terms of assembly, homooctamer; tetramer of dimers.

It is found in the cytoplasm. The catalysed reaction is 3-amino-2-oxopropyl phosphate + 1-deoxy-D-xylulose 5-phosphate = pyridoxine 5'-phosphate + phosphate + 2 H2O + H(+). It participates in cofactor biosynthesis; pyridoxine 5'-phosphate biosynthesis; pyridoxine 5'-phosphate from D-erythrose 4-phosphate: step 5/5. Catalyzes the complicated ring closure reaction between the two acyclic compounds 1-deoxy-D-xylulose-5-phosphate (DXP) and 3-amino-2-oxopropyl phosphate (1-amino-acetone-3-phosphate or AAP) to form pyridoxine 5'-phosphate (PNP) and inorganic phosphate. The sequence is that of Pyridoxine 5'-phosphate synthase from Synechococcus sp. (strain CC9605).